The sequence spans 414 residues: MSEYIRVTEDENDEPIEIPSEDDGTVLLSTVTAQFPGACGLRYRNPVSQCMRGVRLVEGILHAPDAGWGNLVYVVNYPKDNKRKMDETDASSAVKVKRAVQKTSDLIVLGLPWKTTEQDLKEYFSTFGEVLMVQVKKDLKTGHSKGFGFVRFTEYETQVKVMSQRHMIDGRWCDCKLPNSKQSQDEPLRSRKVFVGRCTEDMTEDELREFFSQYGDVMDVFIPKPFRAFAFVTFADDQIAQSLCGEDLIIKGISVHISNAEPKHNSNRQLERSGRFGGNPGGFGNQGGFGNSRGGGAGLGNNQGSNMGGGMNFGAFSINPAMMAAAQAALQSSWGMMGMLASQQNQSGPSGNNQNQGNMQREPNQAFGSGNNSYSGSNSGAAIGWGSASNAGSGSGFNGGFGSSMDSKSSGWGM.

Residues Lys79, Lys84, Lys95, Lys102, and Lys181 each participate in a glycyl lysine isopeptide (Lys-Gly) (interchain with G-Cter in SUMO2) cross-link. Positions 82-98 match the Nuclear localization signal motif; that stretch reads KRKMDETDASSAVKVKR. RRM domains lie at 104–200 and 191–262; these read SDLI…RCTE and RKVF…NAEP. Ser183 is subject to Phosphoserine. The interaction with UBQLN2 stretch occupies residues 216–414; it reads DVMDVFIPKP…MDSKSSGWGM (199 aa). A Nuclear export signal motif is present at residues 239-250; the sequence is IAQSLCGEDLII. Basic and acidic residues predominate over residues 261–274; it reads EPKHNSNRQLERSG. 2 disordered regions span residues 261-303 and 341-373; these read EPKH…GNNQ and ASQQ…GNNS. A Glycyl lysine isopeptide (Lys-Gly) (interchain with G-Cter in SUMO2) cross-link involves residue Lys263. Residues 275–303 are compositionally biased toward gly residues; it reads RFGGNPGGFGNQGGFGNSRGGGAGLGNNQ. A Phosphoserine modification is found at Ser292. Arg293 carries the post-translational modification Omega-N-methylarginine. A compositionally biased stretch (low complexity) spans 342 to 358; it reads SQQNQSGPSGNNQNQGN.

In terms of assembly, homodimer. Homooligomer (via its N-terminal domain). Interacts with BRDT. Binds specifically to pyrimidine-rich motifs of TAR DNA and to single stranded TG repeated sequences. Binds to RNA, specifically to UG repeated sequences with a minimum of six contiguous repeats. Interacts with ATXN2; the interaction is RNA-dependent. Interacts with MATR3. Interacts with UBQLN2. Interacts with HNRNPA2B1. Interacts with ZNF106. Interacts with CNOT7/CAF1. Interacts with CRY2. Interacts with PPIA/CYPA; the interaction is dependent on RNA-binding activity of TARDBP and PPIase activity of PPIA/CYPA and acetylation of PPIA/CYPA at 'Lys-125' favors the interaction. Post-translationally, hyperphosphorylated in hippocampus, neocortex, and spinal cord from individuals affected with ALS and FTLDU. Phosphorylated upon cellular stress. Ubiquitinated in hippocampus, neocortex, and spinal cord from individuals affected with ALS and FTLDU. In terms of processing, cleaved to generate C-terminal fragments in hippocampus, neocortex, and spinal cord from individuals affected with ALS and FTLDU. In terms of tissue distribution, ubiquitously expressed. In particular, expression is high in pancreas, placenta, lung, genital tract and spleen.

It is found in the nucleus. It localises to the cytoplasm. Its subcellular location is the stress granule. The protein localises to the mitochondrion. Functionally, RNA-binding protein that is involved in various steps of RNA biogenesis and processing. Preferentially binds, via its two RNA recognition motifs RRM1 and RRM2, to GU-repeats on RNA molecules predominantly localized within long introns and in the 3'UTR of mRNAs. In turn, regulates the splicing of many non-coding and protein-coding RNAs including proteins involved in neuronal survival, as well as mRNAs that encode proteins relevant for neurodegenerative diseases. Plays a role in maintaining mitochondrial homeostasis by regulating the processing of mitochondrial transcripts. Also regulates mRNA stability by recruiting CNOT7/CAF1 deadenylase on mRNA 3'UTR leading to poly(A) tail deadenylation and thus shortening. In response to oxidative insult, associates with stalled ribosomes localized to stress granules (SGs) and contributes to cell survival. Also participates in the normal skeletal muscle formation and regeneration, forming cytoplasmic myo-granules and binding mRNAs that encode sarcomeric proteins. Plays a role in the maintenance of the circadian clock periodicity via stabilization of the CRY1 and CRY2 proteins in a FBXL3-dependent manner. Negatively regulates the expression of CDK6. Regulates the expression of HDAC6, ATG7 and VCP in a PPIA/CYPA-dependent manner. In Homo sapiens (Human), this protein is TAR DNA-binding protein 43.